Reading from the N-terminus, the 63-residue chain is MPKMKSVKSAVKRFKVGKNKIKRGSAFRSHILTKKPAKRMRNLRTAKYVHSTNVKAVEKMLGI.

It belongs to the bacterial ribosomal protein bL35 family.

This is Large ribosomal subunit protein bL35 from Campylobacter jejuni subsp. doylei (strain ATCC BAA-1458 / RM4099 / 269.97).